The primary structure comprises 168 residues: Microtubule-associated protein Jupiter (168 aa).

The segment covering 1–14 (MISNFDCTDNQASS) has biased composition (polar residues). Positions 1–33 (MISNFDCTDNQASSKVLRPPGGGSSDIFGSEMP) are disordered. Phosphoserine is present on S24. At T35 the chain carries Phosphothreonine. The span at 76 to 87 (RGQKTVDSHSRL) shows a compositional bias: basic and acidic residues. Disordered regions lie at residues 76–106 (RGQKTVDSHSRLFGEPTRPITPGKNHMKSSI) and 124–168 (NGHY…GAGK). Phosphothreonine is present on residues T92 and T96. A phosphoserine mark is found at S105, S133, and S144. A compositionally biased stretch (low complexity) spans 131–144 (SGSVSSASSSVSSS). Polar residues predominate over residues 145–155 (TENLKMNSGSR).

The protein belongs to the MAP Jupiter family.

It localises to the nucleus. Its subcellular location is the cytoplasm. The protein localises to the cytoskeleton. The protein resides in the spindle. Functionally, binds to all microtubule populations. This chain is Microtubule-associated protein Jupiter, found in Drosophila simulans (Fruit fly).